The chain runs to 424 residues: Enolase (424 aa).

Position 163 (glutamine 163) interacts with (2R)-2-phosphoglycerate. The active-site Proton donor is glutamate 204. Aspartate 241, glutamate 284, and aspartate 311 together coordinate Mg(2+). (2R)-2-phosphoglycerate-binding residues include lysine 336, arginine 365, serine 366, and lysine 387. Lysine 336 functions as the Proton acceptor in the catalytic mechanism.

The protein belongs to the enolase family. The cofactor is Mg(2+).

Its subcellular location is the cytoplasm. The protein resides in the secreted. It is found in the cell surface. The enzyme catalyses (2R)-2-phosphoglycerate = phosphoenolpyruvate + H2O. It functions in the pathway carbohydrate degradation; glycolysis; pyruvate from D-glyceraldehyde 3-phosphate: step 4/5. Its function is as follows. Catalyzes the reversible conversion of 2-phosphoglycerate (2-PG) into phosphoenolpyruvate (PEP). It is essential for the degradation of carbohydrates via glycolysis. The protein is Enolase of Dictyoglomus turgidum (strain DSM 6724 / Z-1310).